Consider the following 215-residue polypeptide: Probable phosphoglycerate mutase GpmB (215 aa).

Residues R8–N15, Q21–G22, R58, E82–M85, and G151–M152 contribute to the substrate site. Residue H9 is the Tele-phosphohistidine intermediate of the active site. E82 acts as the Proton donor/acceptor in catalysis.

It belongs to the phosphoglycerate mutase family. GpmB subfamily.

It carries out the reaction (2R)-2-phosphoglycerate = (2R)-3-phosphoglycerate. Its pathway is carbohydrate degradation; glycolysis; pyruvate from D-glyceraldehyde 3-phosphate: step 3/5. The polypeptide is Probable phosphoglycerate mutase GpmB (Yersinia pseudotuberculosis serotype O:1b (strain IP 31758)).